The primary structure comprises 183 residues: Capsid protein (183 aa).

Residues 150–183 are disordered; the sequence is RQRGRTIRRRTPSPRRRRSQSPRRRRSQSRESQC. Residues 151 to 176 are compositionally biased toward basic residues; the sequence is QRGRTIRRRTPSPRRRRSQSPRRRRS. The Bipartite nuclear localization signal signature appears at 158–175; it reads RRTPSPRRRRSQSPRRRR. Phosphoserine; by host occurs at positions 162 and 170. Repeat copies occupy residues 162-169 and 170-177. Residues 162–177 are 2 X 8 AA repeats of S-P-R-R-R-[PR]-S-Q; it reads SPRRRRSQSPRRRRSQ. An RNA binding region spans residues 177 to 183; sequence QSRESQC.

This sequence belongs to the orthohepadnavirus core antigen family. In terms of assembly, homodimerizes, then multimerizes. Interacts with cytosol exposed regions of viral L glycoprotein present in the reticulum-to-Golgi compartment. Interacts with human FLNB. Phosphorylated form interacts with host importin alpha; this interaction depends on the exposure of the NLS, which itself depends upon genome maturation and/or phosphorylation of the capsid protein. Interacts with host NUP153. In terms of processing, phosphorylated by host SRPK1, SRPK2, and maybe protein kinase C or GAPDH. Phosphorylation is critical for pregenomic RNA packaging. Protein kinase C phosphorylation is stimulated by HBx protein and may play a role in transport of the viral genome to the nucleus at the late step during the viral replication cycle.

Its subcellular location is the virion. The protein localises to the host cytoplasm. Functionally, self assembles to form an icosahedral capsid. Most capsids appear to be large particles with an icosahedral symmetry of T=4 and consist of 240 copies of capsid protein, though a fraction forms smaller T=3 particles consisting of 180 capsid proteins. Entering capsids are transported along microtubules to the nucleus. Phosphorylation of the capsid is thought to induce exposure of nuclear localization signal in the C-terminal portion of the capsid protein that allows binding to the nuclear pore complex via the importin (karyopherin-) alpha and beta. Capsids are imported in intact form through the nuclear pore into the nuclear basket, where it probably binds NUP153. Only capsids that contain the mature viral genome can release the viral DNA and capsid protein into the nucleoplasm. Immature capsids get stuck in the basket. Capsids encapsulate the pre-genomic RNA and the P protein. Pre-genomic RNA is reverse-transcribed into DNA while the capsid is still in the cytoplasm. The capsid can then either be directed to the nucleus, providing more genomes for transcription, or bud through the endoplasmic reticulum to provide new virions. This Homo sapiens (Human) protein is Capsid protein.